The sequence spans 804 residues: Phenylalanine--tRNA ligase beta subunit (804 aa).

One can recognise a tRNA-binding domain in the interval 40–155; sequence GEGIKGVVIG…NDAETGSDAL (116 aa). Residues 409 to 484 enclose the B5 domain; the sequence is IEANNIHVSA…RLYGYDNIPS (76 aa). Mg(2+) is bound by residues Asp462, Asp468, Glu471, and Glu472. The 94-residue stretch at 710–803 folds into the FDX-ACB domain; it reads PKYPSVTRDI…LEDTYQAVLR (94 aa).

This sequence belongs to the phenylalanyl-tRNA synthetase beta subunit family. Type 1 subfamily. In terms of assembly, tetramer of two alpha and two beta subunits. Mg(2+) is required as a cofactor.

The protein localises to the cytoplasm. It carries out the reaction tRNA(Phe) + L-phenylalanine + ATP = L-phenylalanyl-tRNA(Phe) + AMP + diphosphate + H(+). The polypeptide is Phenylalanine--tRNA ligase beta subunit (pheT) (Bacillus subtilis (strain 168)).